Here is a 286-residue protein sequence, read N- to C-terminus: MAGAKEIKTKIASVKNTQKITSAMEMVAASKMRRAQDRMAASRPYAESMRKVIGHVAQGSLEYKHPYLEVREAKRVGYIVVATDRGLCGGLNVNLFKKVVADVKSWKEQGAEFEFCPIGARSVQFFKSFGGQVSAHASGLGDAPKLADLIGTVRVMLDAYNEGKLDRLYVVFNKFVNTMTQTPVIEQLLPLPKSEDDEVAHRWDYIYEPDPKALLDTLLVRYVESQVYQGVVENIASEQAARMVAMKAATDNAGTLIDDLQLVYNKARQAAITQELSEIVSGASAV.

This sequence belongs to the ATPase gamma chain family. In terms of assembly, F-type ATPases have 2 components, CF(1) - the catalytic core - and CF(0) - the membrane proton channel. CF(1) has five subunits: alpha(3), beta(3), gamma(1), delta(1), epsilon(1). CF(0) has three main subunits: a, b and c.

It localises to the cell inner membrane. In terms of biological role, produces ATP from ADP in the presence of a proton gradient across the membrane. The gamma chain is believed to be important in regulating ATPase activity and the flow of protons through the CF(0) complex. The sequence is that of ATP synthase gamma chain from Shewanella sp. (strain MR-4).